The sequence spans 207 residues: Ribosomal RNA small subunit methyltransferase G (207 aa).

S-adenosyl-L-methionine is bound by residues glycine 73, leucine 78, 124–125, and arginine 139; that span reads VE.

The protein belongs to the methyltransferase superfamily. RNA methyltransferase RsmG family.

The protein resides in the cytoplasm. The enzyme catalyses guanosine(527) in 16S rRNA + S-adenosyl-L-methionine = N(7)-methylguanosine(527) in 16S rRNA + S-adenosyl-L-homocysteine. Specifically methylates the N7 position of guanine in position 527 of 16S rRNA. This chain is Ribosomal RNA small subunit methyltransferase G, found in Escherichia coli (strain SMS-3-5 / SECEC).